The chain runs to 102 residues: Small ribosomal subunit protein uS10 (102 aa).

Belongs to the universal ribosomal protein uS10 family. As to quaternary structure, part of the 30S ribosomal subunit.

Its function is as follows. Involved in the binding of tRNA to the ribosomes. This chain is Small ribosomal subunit protein uS10, found in Rhizobium meliloti (strain 1021) (Ensifer meliloti).